Consider the following 210-residue polypeptide: Thiamine-phosphate synthase (210 aa).

Residues Q38–K42 and N70 contribute to the 4-amino-2-methyl-5-(diphosphooxymethyl)pyrimidine site. Residues D71 and D90 each coordinate Mg(2+). Residue S107 coordinates 4-amino-2-methyl-5-(diphosphooxymethyl)pyrimidine. T132–T134 contacts 2-[(2R,5Z)-2-carboxy-4-methylthiazol-5(2H)-ylidene]ethyl phosphate. K135 is a 4-amino-2-methyl-5-(diphosphooxymethyl)pyrimidine binding site. 2-[(2R,5Z)-2-carboxy-4-methylthiazol-5(2H)-ylidene]ethyl phosphate is bound at residue I183 to S184.

This sequence belongs to the thiamine-phosphate synthase family. The cofactor is Mg(2+).

It carries out the reaction 2-[(2R,5Z)-2-carboxy-4-methylthiazol-5(2H)-ylidene]ethyl phosphate + 4-amino-2-methyl-5-(diphosphooxymethyl)pyrimidine + 2 H(+) = thiamine phosphate + CO2 + diphosphate. The catalysed reaction is 2-(2-carboxy-4-methylthiazol-5-yl)ethyl phosphate + 4-amino-2-methyl-5-(diphosphooxymethyl)pyrimidine + 2 H(+) = thiamine phosphate + CO2 + diphosphate. The enzyme catalyses 4-methyl-5-(2-phosphooxyethyl)-thiazole + 4-amino-2-methyl-5-(diphosphooxymethyl)pyrimidine + H(+) = thiamine phosphate + diphosphate. It participates in cofactor biosynthesis; thiamine diphosphate biosynthesis; thiamine phosphate from 4-amino-2-methyl-5-diphosphomethylpyrimidine and 4-methyl-5-(2-phosphoethyl)-thiazole: step 1/1. Functionally, condenses 4-methyl-5-(beta-hydroxyethyl)thiazole monophosphate (THZ-P) and 2-methyl-4-amino-5-hydroxymethyl pyrimidine pyrophosphate (HMP-PP) to form thiamine monophosphate (TMP). The polypeptide is Thiamine-phosphate synthase (Archaeoglobus fulgidus (strain ATCC 49558 / DSM 4304 / JCM 9628 / NBRC 100126 / VC-16)).